The primary structure comprises 188 residues: UPF0488 protein C8orf33 homolog (188 aa).

Disordered stretches follow at residues 1–65 (MAAP…AEAQ), 87–112 (QRPT…TPLP), and 144–182 (AHSA…RDEE). Ala2 carries the post-translational modification N-acetylalanine. Phosphoserine is present on Ser41. Residues 166–182 (PRPEGRSKGTSDTRDEE) are compositionally biased toward basic and acidic residues.

This sequence belongs to the UPF0488 family.

The polypeptide is UPF0488 protein C8orf33 homolog (Bos taurus (Bovine)).